We begin with the raw amino-acid sequence, 421 residues long: Medium-chain specific acyl-CoA dehydrogenase, mitochondrial (421 aa).

A mitochondrion-targeting transit peptide spans Met-1–Thr-25. Lys-69 is modified (N6-acetyllysine; alternate). Lys-69 bears the N6-succinyllysine; alternate mark. Residue Tyr-158–Ser-167 participates in FAD binding. Ser-167 is a binding site for octanoyl-CoA. Position 179 is an N6-succinyllysine (Lys-179). Trp-191 to Thr-193 is an FAD binding site. Lys-212, Lys-217, and Lys-271 each carry N6-acetyllysine; alternate. N6-succinyllysine; alternate occurs at positions 212, 217, and 271. Residue Asp-278 participates in octanoyl-CoA binding. N6-acetyllysine is present on Lys-279. Arg-281 contributes to the octanoyl-CoA binding site. Lys-301 is modified (N6-acetyllysine). Residues Arg-306 to Thr-308 and His-316 to Gln-317 each bind FAD. Arg-349 and Thr-351 together coordinate octanoyl-CoA. Thr-351 bears the Phosphothreonine mark. Gln-374 to Gly-378 serves as a coordination point for FAD. Residue Glu-401 coordinates octanoyl-CoA. The active-site Proton acceptor is the Glu-401. Gly-402–Gln-405 contacts FAD.

It belongs to the acyl-CoA dehydrogenase family. In terms of assembly, homotetramer. Interacts with the heterodimeric electron transfer flavoprotein ETF. FAD serves as cofactor. Post-translationally, acetylated. Could occur at proximity of the cofactor-binding sites and reduce the catalytic activity. Could be deacetylated by SIRT3.

Its subcellular location is the mitochondrion matrix. The enzyme catalyses a medium-chain 2,3-saturated fatty acyl-CoA + oxidized [electron-transfer flavoprotein] + H(+) = a medium-chain (2E)-enoyl-CoA + reduced [electron-transfer flavoprotein]. The catalysed reaction is pentanoyl-CoA + oxidized [electron-transfer flavoprotein] + H(+) = (2E)-pentenoyl-CoA + reduced [electron-transfer flavoprotein]. It carries out the reaction hexanoyl-CoA + oxidized [electron-transfer flavoprotein] + H(+) = (2E)-hexenoyl-CoA + reduced [electron-transfer flavoprotein]. It catalyses the reaction octanoyl-CoA + oxidized [electron-transfer flavoprotein] + H(+) = (2E)-octenoyl-CoA + reduced [electron-transfer flavoprotein]. The enzyme catalyses decanoyl-CoA + oxidized [electron-transfer flavoprotein] + H(+) = (2E)-decenoyl-CoA + reduced [electron-transfer flavoprotein]. The catalysed reaction is dodecanoyl-CoA + oxidized [electron-transfer flavoprotein] + H(+) = (2E)-dodecenoyl-CoA + reduced [electron-transfer flavoprotein]. It carries out the reaction tetradecanoyl-CoA + oxidized [electron-transfer flavoprotein] + H(+) = (2E)-tetradecenoyl-CoA + reduced [electron-transfer flavoprotein]. It catalyses the reaction oxidized [electron-transfer flavoprotein] + hexadecanoyl-CoA + H(+) = (2E)-hexadecenoyl-CoA + reduced [electron-transfer flavoprotein]. It functions in the pathway lipid metabolism; mitochondrial fatty acid beta-oxidation. In terms of biological role, medium-chain specific acyl-CoA dehydrogenase is one of the acyl-CoA dehydrogenases that catalyze the first step of mitochondrial fatty acid beta-oxidation, an aerobic process breaking down fatty acids into acetyl-CoA and allowing the production of energy from fats. The first step of fatty acid beta-oxidation consists in the removal of one hydrogen from C-2 and C-3 of the straight-chain fatty acyl-CoA thioester, resulting in the formation of trans-2-enoyl-CoA. Electron transfer flavoprotein (ETF) is the electron acceptor that transfers electrons to the main mitochondrial respiratory chain via ETF-ubiquinone oxidoreductase (ETF dehydrogenase). Among the different mitochondrial acyl-CoA dehydrogenases, medium-chain specific acyl-CoA dehydrogenase acts specifically on acyl-CoAs with saturated 6 to 12 carbons long primary chains. This is Medium-chain specific acyl-CoA dehydrogenase, mitochondrial from Pan troglodytes (Chimpanzee).